Here is a 189-residue protein sequence, read N- to C-terminus: GTP cyclohydrolase 1 (189 aa).

Positions 78, 81, and 150 each coordinate Zn(2+).

It belongs to the GTP cyclohydrolase I family. Toroid-shaped homodecamer, composed of two pentamers of five dimers.

The catalysed reaction is GTP + H2O = 7,8-dihydroneopterin 3'-triphosphate + formate + H(+). The protein operates within cofactor biosynthesis; 7,8-dihydroneopterin triphosphate biosynthesis; 7,8-dihydroneopterin triphosphate from GTP: step 1/1. The sequence is that of GTP cyclohydrolase 1 from Bacillus pumilus (strain SAFR-032).